Consider the following 432-residue polypeptide: Methylenetetrahydrofolate--tRNA-(uracil-5-)-methyltransferase TrmFO (432 aa).

7–12 serves as a coordination point for FAD; that stretch reads GAGLAG.

This sequence belongs to the MnmG family. TrmFO subfamily. FAD is required as a cofactor.

The protein localises to the cytoplasm. It catalyses the reaction uridine(54) in tRNA + (6R)-5,10-methylene-5,6,7,8-tetrahydrofolate + NADH + H(+) = 5-methyluridine(54) in tRNA + (6S)-5,6,7,8-tetrahydrofolate + NAD(+). The catalysed reaction is uridine(54) in tRNA + (6R)-5,10-methylene-5,6,7,8-tetrahydrofolate + NADPH + H(+) = 5-methyluridine(54) in tRNA + (6S)-5,6,7,8-tetrahydrofolate + NADP(+). In terms of biological role, catalyzes the folate-dependent formation of 5-methyl-uridine at position 54 (M-5-U54) in all tRNAs. This Anoxybacillus flavithermus (strain DSM 21510 / WK1) protein is Methylenetetrahydrofolate--tRNA-(uracil-5-)-methyltransferase TrmFO.